Here is a 1435-residue protein sequence, read N- to C-terminus: DNA polymerase III PolC-type (1435 aa).

The Exonuclease domain maps to 420–576; that stretch reads YVVFDVETTG…YDTEATAYIF (157 aa).

Belongs to the DNA polymerase type-C family. PolC subfamily.

The protein localises to the cytoplasm. It catalyses the reaction DNA(n) + a 2'-deoxyribonucleoside 5'-triphosphate = DNA(n+1) + diphosphate. Required for replicative DNA synthesis. This DNA polymerase also exhibits 3' to 5' exonuclease activity. In Staphylococcus aureus, this protein is DNA polymerase III PolC-type.